The chain runs to 1807 residues: Phospholipase D (1807 aa).

Residues 1-28 form a disordered region; it reads MPGPDDDVREPTAAARTNNSGYGLRAAP. A run of 3 helical transmembrane segments spans residues 257-277, 305-325, and 587-607; these read IAFVSAIVGFIFPICLVIVTS, AGVFLGLAVLGGILFFAVFVY, and VYYILFLFAGGIIAPVVGFLA. Positions 697–734 are disordered; it reads TASRMGTGNLAPASSRVDSSTQSEDSFEAPKPPPSSVS. 2 PLD phosphodiesterase domains span residues 853 to 880 and 1249 to 1276; these read GFWSHHEKIVCIDQSLAFVGGLDLCFGR and EQIYIHSKLMIADDRCAILGSANINDRS. Active-site residues include His858, Lys860, Asp865, His1254, Lys1256, and Asp1261. Polar residues-rich tracts occupy residues 1531–1547, 1568–1578, and 1597–1614; these read FSRSNSVSTPTNFSQLD, YNSNSMPSNAS, and YPNSPSVASFQHTPQSPA. A disordered region spans residues 1531 to 1621; sequence FSRSNSVSTP…SPAIATGARS (91 aa).

It belongs to the phospholipase D family. TM-PLD subfamily.

It localises to the membrane. The enzyme catalyses a 1,2-diacyl-sn-glycero-3-phosphocholine + H2O = a 1,2-diacyl-sn-glycero-3-phosphate + choline + H(+). Hydrolyzes glycerol-phospholipids at the terminal phosphodiesteric bond. This Phytophthora infestans (Potato late blight agent) protein is Phospholipase D.